Reading from the N-terminus, the 117-residue chain is Photosystem II reaction center Psb28 protein (117 aa).

This sequence belongs to the Psb28 family. As to quaternary structure, part of the photosystem II complex.

The protein resides in the cellular thylakoid membrane. This Prochlorococcus marinus (strain MIT 9312) protein is Photosystem II reaction center Psb28 protein.